Consider the following 129-residue polypeptide: Small ribosomal subunit protein bS6 (129 aa).

The protein belongs to the bacterial ribosomal protein bS6 family.

In terms of biological role, binds together with bS18 to 16S ribosomal RNA. This chain is Small ribosomal subunit protein bS6, found in Microcystis aeruginosa (strain NIES-843 / IAM M-2473).